Consider the following 309-residue polypeptide: Tagatose-6-phosphate kinase (309 aa).

This sequence belongs to the carbohydrate kinase PfkB family. LacC subfamily.

It carries out the reaction D-tagatofuranose 6-phosphate + ATP = D-tagatofuranose 1,6-bisphosphate + ADP + H(+). Its pathway is carbohydrate metabolism; D-tagatose 6-phosphate degradation; D-glyceraldehyde 3-phosphate and glycerone phosphate from D-tagatose 6-phosphate: step 1/2. The chain is Tagatose-6-phosphate kinase from Streptococcus pneumoniae (strain Hungary19A-6).